Consider the following 694-residue polypeptide: Phosphatase and actin regulator 4-A (694 aa).

2 stretches are compositionally biased toward basic and acidic residues: residues 1–13 (MEDR…DHSE) and 46–72 (SSDS…ELIK). Disordered stretches follow at residues 1 to 29 (MEDR…KSKF), 42 to 169 (RKRK…QPLP), 192 to 403 (VNEV…HIRI), 426 to 445 (LFMQ…RSLP), and 450 to 572 (LLKV…QIRQ). An RPEL 1 repeat occupies 55–80 (EVLERKISTRKPREELIKRGLLVEVP). The segment covering 240–267 (SISTSVTQESAVAGQKSDSSNRLQSSAP) has biased composition (polar residues). Residues 300–317 (AELSLALAGSPLSPAGSR) are compositionally biased toward low complexity. Composition is skewed to pro residues over residues 318-327 (PSPPLPPKRA) and 372-381 (SNPPVPPLTL). Composition is skewed to acidic residues over residues 455–467 (DDED…DESL), 499–511 (QEEE…DTDS), and 519–529 (DDEEEEEEEET). RPEL repeat units lie at residues 576–601 (TQLN…QKNE) and 613–638 (RRLT…RFNE).

It belongs to the phosphatase and actin regulator family. Binds ppp1ca and actin.

The protein resides in the cytoplasm. The protein localises to the cell projection. Its subcellular location is the lamellipodium. Regulator of protein phosphatase 1 (PP1) required for neural tube and optic fissure closure, and enteric neural crest cell (ENCCs) migration during development. Acts as an activator of PP1. During neural tube closure, localizes to the ventral neural tube and activates PP1, leading to down-regulate cell proliferation within cranial neural tissue and the neural retina. Also acts as a regulator of migration of enteric neural crest cells (ENCCs) by activating PP1, leading to repression of the integrin signaling through the rho/rock pathway. The chain is Phosphatase and actin regulator 4-A (phactr4-a) from Xenopus laevis (African clawed frog).